The following is a 174-amino-acid chain: ATP synthase subunit d, mitochondrial (174 aa).

N-acetylserine is present on Ser2.

Belongs to the ATPase d subunit family.

Its subcellular location is the mitochondrion inner membrane. Mitochondrial membrane ATP synthase (F(1)F(0) ATP synthase or Complex V) produces ATP from ADP in the presence of a proton gradient across the membrane which is generated by electron transport complexes of the respiratory chain. F-type ATPases consist of two structural domains, F(1) - containing the extramembraneous catalytic core, and F(0) - containing the membrane proton channel, linked together by a central stalk and a peripheral stalk. During catalysis, ATP synthesis in the catalytic domain of F(1) is coupled via a rotary mechanism of the central stalk subunits to proton translocation. Part of the complex F(0) domain and the peripheric stalk, which acts as a stator to hold the catalytic alpha(3)beta(3) subcomplex and subunit a/ATP6 static relative to the rotary elements. This is ATP synthase subunit d, mitochondrial (ATP7) from Kluyveromyces lactis (strain ATCC 8585 / CBS 2359 / DSM 70799 / NBRC 1267 / NRRL Y-1140 / WM37) (Yeast).